We begin with the raw amino-acid sequence, 354 residues long: Holliday junction branch migration complex subunit RuvB (354 aa).

A large ATPase domain (RuvB-L) region spans residues 1–183 (MTGDNLVSAY…FGFVAHLDFY (183 aa)). Residues Arg-23, Gly-64, Lys-67, Thr-68, Ser-69, 130–132 (EDF), Arg-173, Tyr-183, and Arg-220 each bind ATP. Thr-68 is a Mg(2+) binding site. Residues 184 to 254 (SPADLETLLN…TAQAALTVYD (71 aa)) are small ATPAse domain (RuvB-S). The segment at 257–354 (ALGLDRLDRA…DLFSVEPDQP (98 aa)) is head domain (RuvB-H). DNA-binding residues include Arg-312 and Arg-317.

It belongs to the RuvB family. Homohexamer. Forms an RuvA(8)-RuvB(12)-Holliday junction (HJ) complex. HJ DNA is sandwiched between 2 RuvA tetramers; dsDNA enters through RuvA and exits via RuvB. An RuvB hexamer assembles on each DNA strand where it exits the tetramer. Each RuvB hexamer is contacted by two RuvA subunits (via domain III) on 2 adjacent RuvB subunits; this complex drives branch migration. In the full resolvosome a probable DNA-RuvA(4)-RuvB(12)-RuvC(2) complex forms which resolves the HJ.

It localises to the cytoplasm. It catalyses the reaction ATP + H2O = ADP + phosphate + H(+). The RuvA-RuvB-RuvC complex processes Holliday junction (HJ) DNA during genetic recombination and DNA repair, while the RuvA-RuvB complex plays an important role in the rescue of blocked DNA replication forks via replication fork reversal (RFR). RuvA specifically binds to HJ cruciform DNA, conferring on it an open structure. The RuvB hexamer acts as an ATP-dependent pump, pulling dsDNA into and through the RuvAB complex. RuvB forms 2 homohexamers on either side of HJ DNA bound by 1 or 2 RuvA tetramers; 4 subunits per hexamer contact DNA at a time. Coordinated motions by a converter formed by DNA-disengaged RuvB subunits stimulates ATP hydrolysis and nucleotide exchange. Immobilization of the converter enables RuvB to convert the ATP-contained energy into a lever motion, pulling 2 nucleotides of DNA out of the RuvA tetramer per ATP hydrolyzed, thus driving DNA branch migration. The RuvB motors rotate together with the DNA substrate, which together with the progressing nucleotide cycle form the mechanistic basis for DNA recombination by continuous HJ branch migration. Branch migration allows RuvC to scan DNA until it finds its consensus sequence, where it cleaves and resolves cruciform DNA. The polypeptide is Holliday junction branch migration complex subunit RuvB (Salinispora tropica (strain ATCC BAA-916 / DSM 44818 / JCM 13857 / NBRC 105044 / CNB-440)).